The sequence spans 574 residues: Laccase-12 (574 aa).

An N-terminal signal peptide occupies residues 1-27 (MAAASSVLRCCLLVAALMTLSAMGAEA). 2 consecutive Plastocyanin-like domains span residues 35–151 (DVQT…PPAG) and 161–314 (EEVP…YDDP). Residue N81 is glycosylated (N-linked (GlcNAc...) asparagine). Cu cation contacts are provided by H85, H87, H130, and H132. N-linked (GlcNAc...) asparagine glycosylation is found at N173, N190, N206, N242, N302, N335, N342, N381, N388, N398, N434, N441, and N447. A Plastocyanin-like 3 domain is found at 424 to 558 (NFPYYPLNPF…KMAWLVLDGS (135 aa)). H475, H478, H480, H537, C538, H539, and H543 together coordinate Cu cation.

Belongs to the multicopper oxidase family. Requires Cu cation as cofactor.

The protein localises to the secreted. The protein resides in the extracellular space. It localises to the apoplast. The catalysed reaction is 4 hydroquinone + O2 = 4 benzosemiquinone + 2 H2O. Its function is as follows. Lignin degradation and detoxification of lignin-derived products. This Oryza sativa subsp. japonica (Rice) protein is Laccase-12 (LAC12).